Reading from the N-terminus, the 392-residue chain is Succinyl-diaminopimelate desuccinylase (392 aa).

A Zn(2+)-binding site is contributed by H71. D73 is a catalytic residue. Residue D102 coordinates Zn(2+). E144 acts as the Proton acceptor in catalysis. Zn(2+) is bound by residues E145, E173, and H362.

This sequence belongs to the peptidase M20A family. DapE subfamily. As to quaternary structure, homodimer. Requires Zn(2+) as cofactor. Co(2+) serves as cofactor.

It carries out the reaction N-succinyl-(2S,6S)-2,6-diaminopimelate + H2O = (2S,6S)-2,6-diaminopimelate + succinate. Its pathway is amino-acid biosynthesis; L-lysine biosynthesis via DAP pathway; LL-2,6-diaminopimelate from (S)-tetrahydrodipicolinate (succinylase route): step 3/3. In terms of biological role, catalyzes the hydrolysis of N-succinyl-L,L-diaminopimelic acid (SDAP), forming succinate and LL-2,6-diaminopimelate (DAP), an intermediate involved in the bacterial biosynthesis of lysine and meso-diaminopimelic acid, an essential component of bacterial cell walls. This chain is Succinyl-diaminopimelate desuccinylase, found in Rhodospirillum rubrum (strain ATCC 11170 / ATH 1.1.1 / DSM 467 / LMG 4362 / NCIMB 8255 / S1).